The following is a 191-amino-acid chain: Guanylate kinase (191 aa).

In terms of domain architecture, Guanylate kinase-like spans 9-187; it reads GQLIVITGPS…SLIALETAIF (179 aa). 16-23 contributes to the ATP binding site; that stretch reads GPSGVGKG.

This sequence belongs to the guanylate kinase family.

Its subcellular location is the cytoplasm. It carries out the reaction GMP + ATP = GDP + ADP. In terms of biological role, essential for recycling GMP and indirectly, cGMP. The chain is Guanylate kinase from Thermosynechococcus vestitus (strain NIES-2133 / IAM M-273 / BP-1).